The following is a 116-amino-acid chain: M-zodatoxin-Lt6a/b (116 aa).

A signal peptide spans 1 to 22 (MKYFVVALTLAVAFVCIEECKT). Propeptides lie at residues 23–44 (VEIGYAVSEDFDQNEIDNEEAR) and 80–83 (EEAR). Short sequence motifs (processing quadruplet motif) lie at residues 41-44 (EEAR) and 80-83 (EEAR). Gln-84 is modified (pyrrolidone carboxylic acid).

The protein belongs to the cationic peptide 03 (latarcin) family. 06 subfamily. Post-translationally, cleavage of the propeptide depends on the processing quadruplet motif (XXXR, with at least one of X being E). In terms of tissue distribution, expressed by the venom gland.

It localises to the secreted. Does not have antimicrobial activity against neither Gram-positive bacteria (A.globiformis VKM Ac-1112 (MIC&gt;70 uM), and B.subtilis VKM B-501 (MIC&gt;70 uM)), nor Gram-negative bacteria (E.coli DH5-alpha (MIC&gt;70 uM), E.coli MH1 (MIC&gt;70 uM), and P.aeruginosa PAO1 (MIC&gt;70 uM)), nor yeasts (P.pastoris GS115 (MIC&gt;70 uM), and S.cerevisiae Y190 (MIC&gt;70 uM)). Does not have hemolytic activity against rabbit erythrocytes. However, it causes some conductance changes in planar bilayer membranes, without membrane rupture, suggesting a cytolytic function on other biological targets. It causes paralysis, but is not lethal when injected into insect (M.domestica) larvae. The protein is M-zodatoxin-Lt6a/b of Lachesana tarabaevi (Spider).